Consider the following 350-residue polypeptide: MAFKITSSPHVSQGIQTATVMRRVALCLIPGILVQTLFFGFGSLIQLCLAIFTAYLGEALVLKARGRPILITLKDNSALVTASLLALSIPPLAPWWLVVIGSLFAIIIVKHLYGGLGHNLFNPAMAGYVVLLVSFPLQMTSWVAPQGIALNGVDALAAMKAIFAIGPSLGNDFYRLGVDGIAMATPLDTIKTDLSLGLTTLESFAKPIFDGSYGVGWFWVNLAYLAGGLVLLKLKVIRWHISVGILAALFVCASFGFLISPDTHVSPLFHWFSGGTMLAVFFIATDPVTAATSPRGRLIFGASIGIIIYLIRTYGGYPDAVAFAVLLANMCAPFIDHYVRPRTYGHRSAN.

3 consecutive transmembrane segments (helical) span residues 25 to 45 (ALCL…GSLI), 89 to 109 (IPPL…IIIV), and 124 to 144 (AMAG…SWVA). FMN phosphoryl threonine is present on Thr185. Transmembrane regions (helical) follow at residues 212-232 (SYGV…LVLL), 239-259 (WHIS…GFLI), 265-285 (VSPL…FIAT), 298-318 (LIFG…GGYP), and 319-339 (DAVA…DHYV).

The protein belongs to the NqrB/RnfD family. In terms of assembly, the complex is composed of six subunits: RnfA, RnfB, RnfC, RnfD, RnfE and RnfG. Requires FMN as cofactor.

It localises to the cell inner membrane. Its function is as follows. Part of a membrane-bound complex that couples electron transfer with translocation of ions across the membrane. This is Ion-translocating oxidoreductase complex subunit D from Shewanella denitrificans (strain OS217 / ATCC BAA-1090 / DSM 15013).